A 467-amino-acid chain; its full sequence is Peptidoglycan-N-acetylmuramic acid deacetylase PdaC (467 aa).

A helical transmembrane segment spans residues 6–26; it reads IKWFHVLIAVVCVVGLIGFFH. One can recognise a NodB homology domain in the interval 278 to 452; sequence KVIALTFDDG…KLTDQGYQLV (175 aa). The active-site Proton acceptor is D285. 3 residues coordinate a divalent metal cation: D286, H336, and H340. H427 acts as the Proton donor in catalysis.

In the N-terminal section; belongs to the RsiV family. This sequence in the C-terminal section; belongs to the polysaccharide deacetylase family.

The protein resides in the cell membrane. Its activity is regulated as follows. Activated by divalent metal cations; Mn(2+) is the most efficient, followed by Ca(2+) and Mg(2+). In contrast to PgdA from S.pneumoniae, these ions are not absolutely required for deacetylase activity. In terms of biological role, catalyzes the deacetylation of N-acetylmuramic acid (MurNAc) residues in peptidoglycan, a modification that confers resistance to lysosyme. Is not able to deacetylate N-acetylglucosamine (GlcNAc) residues in peptidoglycan, but can deacylate chitin oligomers such as GlcNAc4 and GlcNAc5. Is essentially not active toward chitosan (partially deacetylated GlcNAc polymer) and has very low activity toward chitin (GlcNAc polymer). Does not deacetylate GlcNAc. The sequence is that of Peptidoglycan-N-acetylmuramic acid deacetylase PdaC (pdaC) from Bacillus subtilis (strain 168).